A 310-amino-acid polypeptide reads, in one-letter code: p-hydroxybenzoic acid efflux pump subunit AaeA (310 aa).

A helical transmembrane segment spans residues 12-32 (AITVVLVILAFIAIFNAWVYY).

This sequence belongs to the membrane fusion protein (MFP) (TC 8.A.1) family.

It localises to the cell inner membrane. In terms of biological role, forms an efflux pump with AaeB. In Escherichia coli O9:H4 (strain HS), this protein is p-hydroxybenzoic acid efflux pump subunit AaeA.